The chain runs to 598 residues: uncharacterized protein (598 aa).

The ABC transmembrane type-1 domain occupies 39–322 (LIMVFVFVTV…LSNQFNMIQM (284 aa)). A run of 5 helical transmembrane segments spans residues 40 to 60 (IMVF…PYLI), 80 to 100 (MLIL…QGKI), 150 to 170 (VLGN…GAVI), 177 to 197 (VILS…TQIV), and 273 to 293 (LGFA…IITV). The ABC transporter domain maps to 355–589 (IEFKNVWFSY…RGFYYELFTS (235 aa)). 388 to 395 (GPTGSGKT) contributes to the ATP binding site.

It belongs to the ABC transporter superfamily.

It is found in the cell membrane. This is an uncharacterized protein from Thermotoga maritima (strain ATCC 43589 / DSM 3109 / JCM 10099 / NBRC 100826 / MSB8).